The following is a 407-amino-acid chain: Serine hydroxymethyltransferase (407 aa).

(6S)-5,6,7,8-tetrahydrofolate-binding positions include Leu117 and 121–123 (GHL). Lys226 carries the N6-(pyridoxal phosphate)lysine modification. Residue Glu242 participates in (6S)-5,6,7,8-tetrahydrofolate binding.

The protein belongs to the SHMT family. As to quaternary structure, homodimer. Pyridoxal 5'-phosphate serves as cofactor.

The protein resides in the cytoplasm. The enzyme catalyses (6R)-5,10-methylene-5,6,7,8-tetrahydrofolate + glycine + H2O = (6S)-5,6,7,8-tetrahydrofolate + L-serine. The protein operates within one-carbon metabolism; tetrahydrofolate interconversion. It functions in the pathway amino-acid biosynthesis; glycine biosynthesis; glycine from L-serine: step 1/1. Its function is as follows. Catalyzes the reversible interconversion of serine and glycine with tetrahydrofolate (THF) serving as the one-carbon carrier. This reaction serves as the major source of one-carbon groups required for the biosynthesis of purines, thymidylate, methionine, and other important biomolecules. Also exhibits THF-independent aldolase activity toward beta-hydroxyamino acids, producing glycine and aldehydes, via a retro-aldol mechanism. The polypeptide is Serine hydroxymethyltransferase (Thermus thermophilus (strain ATCC BAA-163 / DSM 7039 / HB27)).